Here is a 340-residue protein sequence, read N- to C-terminus: Proline-rich transmembrane protein 2 (340 aa).

Residues methionine 1–glycine 261 form a disordered region. Residues methionine 1–tyrosine 268 lie on the Cytoplasmic side of the membrane. Serine 28 is subject to Phosphoserine. Threonine 74 is subject to Phosphothreonine. 2 stretches are compositionally biased toward pro residues: residues proline 131 to alanine 155 and alanine 197 to lysine 207. Serine 238 carries the phosphoserine modification. Arginine 240 carries the omega-N-methylarginine modification. A phosphoserine mark is found at serine 248 and serine 249. The segment at residues isoleucine 269–alanine 289 is an intramembrane region (helical). Topologically, residues tyrosine 290 to serine 317 are cytoplasmic. Residues isoleucine 318–valine 338 form a helical membrane-spanning segment. Residues tyrosine 339–lysine 340 lie on the Extracellular side of the membrane.

The protein belongs to the CD225/Dispanin family. As to quaternary structure, component of the outer core of AMPAR complex. AMPAR complex consists of an inner core made of 4 pore-forming GluA/GRIA proteins (GRIA1, GRIA2, GRIA3 and GRIA4) and 4 major auxiliary subunits arranged in a twofold symmetry. One of the two pairs of distinct binding sites is occupied either by CNIH2, CNIH3 or CACNG2, CACNG3. The other harbors CACNG2, CACNG3, CACNG4, CACNG8 or GSG1L. This inner core of AMPAR complex is complemented by outer core constituents binding directly to the GluA/GRIA proteins at sites distinct from the interaction sites of the inner core constituents. Outer core constituents include at least PRRT1, PRRT2, CKAMP44/SHISA9, FRRS1L and NRN1. The proteins of the inner and outer core serve as a platform for other, more peripherally associated AMPAR constituents. Alone or in combination, these auxiliary subunits control the gating and pharmacology of the AMPAR complex and profoundly impact their biogenesis and protein processing. Interacts with intersectin 1/ITSN1. Interacts with SNARE complex components, including SNAP25, STX1A, SYT1 and SYT2; this interaction may inhibit SNARE complex formation.

Its subcellular location is the cell membrane. It is found in the presynaptic cell membrane. The protein localises to the synapse. It localises to the cell projection. The protein resides in the axon. Its subcellular location is the cytoplasmic vesicle. It is found in the secretory vesicle. The protein localises to the synaptic vesicle membrane. It localises to the postsynaptic density membrane. The protein resides in the dendritic spine. As a component of the outer core of AMPAR complex, may be involved in synaptic transmission in the central nervous system. In hippocampal neurons, in presynaptic terminals, plays an important role in the final steps of neurotransmitter release, possibly by regulating Ca(2+)-sensing. In the cerebellum, may inhibit SNARE complex formation and down-regulate short-term facilitation. The protein is Proline-rich transmembrane protein 2 (PRRT2) of Pongo abelii (Sumatran orangutan).